Consider the following 144-residue polypeptide: Single-stranded DNA-binding protein 3 (144 aa).

The region spanning 1–103 is the SSB domain; sequence MNKVVLIGRL…IVAEEVQFLE (103 aa). A compositionally biased stretch (polar residues) spans 112–134; sequence MANDQFNNGNENGSMQLPDNNDI. Residues 112–144 form a disordered region; that stretch reads MANDQFNNGNENGSMQLPDNNDITPIDDGDIPF.

In terms of assembly, homotetramer.

This Clostridium acetobutylicum (strain ATCC 824 / DSM 792 / JCM 1419 / IAM 19013 / LMG 5710 / NBRC 13948 / NRRL B-527 / VKM B-1787 / 2291 / W) protein is Single-stranded DNA-binding protein 3 (ssb3).